Consider the following 273-residue polypeptide: Methylthioribulose-1-phosphate dehydratase (273 aa).

Residues 1 to 27 (MCPTCPPSAASASSENNNTDNNDHLVL) form a disordered region. Position 114 (Cys-114) interacts with substrate. Residues His-132 and His-134 each coordinate Zn(2+). Glu-168 acts as the Proton donor/acceptor in catalysis. His-225 serves as a coordination point for Zn(2+).

Belongs to the aldolase class II family. MtnB subfamily. The cofactor is Zn(2+).

The protein localises to the cytoplasm. It catalyses the reaction 5-(methylsulfanyl)-D-ribulose 1-phosphate = 5-methylsulfanyl-2,3-dioxopentyl phosphate + H2O. The protein operates within amino-acid biosynthesis; L-methionine biosynthesis via salvage pathway; L-methionine from S-methyl-5-thio-alpha-D-ribose 1-phosphate: step 2/6. Catalyzes the dehydration of methylthioribulose-1-phosphate (MTRu-1-P) into 2,3-diketo-5-methylthiopentyl-1-phosphate (DK-MTP-1-P). The protein is Methylthioribulose-1-phosphate dehydratase of Sordaria macrospora (strain ATCC MYA-333 / DSM 997 / K(L3346) / K-hell).